We begin with the raw amino-acid sequence, 463 residues long: NADH dehydrogenase [ubiquinone] iron-sulfur protein 2, mitochondrial (463 aa).

The transit peptide at 1–33 (MAALRALCGFRGVAAQVLRPGAGVRLPIQPSRG) directs the protein to the mitochondrion. K62 carries the N6-acetyllysine modification. The residue at position 118 (R118) is a Symmetric dimethylarginine. [4Fe-4S] cluster contacts are provided by C326, C332, and C347.

The protein belongs to the complex I 49 kDa subunit family. Core subunit of respiratory chain NADH dehydrogenase (Complex I) which is composed of 45 different subunits. Component of the iron-sulfur (IP) fragment of the enzyme. Interacts with NDUFAF3. Interacts with NDUFAF7. Interacts with CERS2. [4Fe-4S] cluster serves as cofactor. Post-translationally, dimethylation at Arg-118 by NDUFAF7 takes place after NDUFS2 assembles into the complex I, leading to stabilize the early intermediate complex.

The protein localises to the mitochondrion inner membrane. It carries out the reaction a ubiquinone + NADH + 5 H(+)(in) = a ubiquinol + NAD(+) + 4 H(+)(out). Functionally, core subunit of the mitochondrial membrane respiratory chain NADH dehydrogenase (Complex I) which catalyzes electron transfer from NADH through the respiratory chain, using ubiquinone as an electron acceptor. Essential for the catalytic activity and assembly of complex I. Redox-sensitive, critical component of the oxygen-sensing pathway in the pulmonary vasculature which plays a key role in acute pulmonary oxygen-sensing and hypoxic pulmonary vasoconstriction. Plays an important role in carotid body sensing of hypoxia. Essential for glia-like neural stem and progenitor cell proliferation, differentiation and subsequent oligodendrocyte or neuronal maturation. In Pan troglodytes (Chimpanzee), this protein is NADH dehydrogenase [ubiquinone] iron-sulfur protein 2, mitochondrial (NDUFS2).